The sequence spans 239 residues: Sugar fermentation stimulation protein homolog (239 aa).

This sequence belongs to the SfsA family.

This chain is Sugar fermentation stimulation protein homolog, found in Rhizobium meliloti (strain 1021) (Ensifer meliloti).